A 977-amino-acid chain; its full sequence is Dynamin-like GTPase OPA1, mitochondrial (977 aa).

A mitochondrion-targeting transit peptide spans Met-1–Asn-86. At Phe-87–Arg-95 the chain is on the mitochondrial matrix side. The chain crosses the membrane as a helical span at residues Leu-96–Tyr-112. Topologically, residues Thr-113–Asp-787 are mitochondrial intermembrane. The stretch at Lys-224–Gly-271 forms a coiled coil. The Dynamin-type G domain occupies Gln-302–Glu-578. The interval Gly-312 to Thr-319 is G1 motif. GTP is bound by residues Ser-315, Gly-317, Lys-318, Thr-319, Ser-320, and Gly-334. Mg(2+) is bound at residue Thr-319. Residues Met-338–Arg-341 are G2 motif. The Mg(2+) site is built by Thr-340 and Asp-415. The tract at residues Asp-415–Gly-418 is G3 motif. The tract at residues Thr-484–Asp-487 is G4 motif. GTP contacts are provided by Lys-485, Asp-487, and Thr-520. The G5 motif stretch occupies residues Val-518–Gly-521. 2 stalk region regions span residues Asp-606–Thr-853 and Cys-891–Leu-945. The interval Ser-753–Cys-873 is paddle region. Residues Trp-788–Arg-798 lie within the membrane without spanning it. The Mitochondrial intermembrane portion of the chain corresponds to Thr-799–Lys-977. Cysteines 873 and 891 form a disulfide. Residues Leu-911–Lys-977 are a coiled coil.

It belongs to the TRAFAC class dynamin-like GTPase superfamily. Dynamin/Fzo/YdjA family. Oligomeric complex consisting of membrane-bound and soluble forms of OPA1. Post-translationally, cleaved by OMA1 or YME1L downstream of the transmembrane region in response to different signals to generate soluble forms. Cleaved by OMA1 at position S1 following stress conditions, generating the short soluble form (Dynamin-like GTPase OPA1, short form; S-OPA1).

It is found in the mitochondrion inner membrane. Its subcellular location is the mitochondrion intermembrane space. The catalysed reaction is GTP + H2O = GDP + phosphate + H(+). Its function is as follows. Dynamin-related GTPase that is essential for normal mitochondrial morphology by mediating fusion of the mitochondrial inner membranes, regulating cristae morphology and maintaining respiratory chain function. Exists in two forms: the transmembrane, long form (Dynamin-like GTPase OPA1, long form; L-OPA1), which is tethered to the inner mitochondrial membrane, and the short soluble form (Dynamin-like GTPase OPA1, short form; S-OPA1), which results from proteolytic cleavage and localizes in the intermembrane space. Both forms (L-OPA1 and S-OPA1) cooperate to catalyze the fusion of the mitochondrial inner membrane. The equilibrium between L-OPA1 and S-OPA1 is essential: excess levels of S-OPA1, produced by cleavage by OMA1 following loss of mitochondrial membrane potential, lead to an impaired equilibrium between L-OPA1 and S-OPA1, inhibiting mitochondrial fusion. The balance between L-OPA1 and S-OPA1 also influences cristae shape and morphology. Its role in mitochondrial morphology is required for mitochondrial genome maintenance. In terms of biological role, constitutes the transmembrane long form (L-OPA1) that plays a central role in mitochondrial inner membrane fusion and cristae morphology. L-OPA1 and the soluble short form (S-OPA1) form higher-order helical assemblies that coordinate the fusion of mitochondrial inner membranes. Inner membrane-anchored L-OPA1 molecules initiate membrane remodeling by recruiting soluble S-OPA1 to rapidly polymerize into a flexible cylindrical scaffold encaging the mitochondrial inner membrane. Once at the membrane surface, the formation of S-OPA1 helices induce bilayer curvature. OPA1 dimerization through the paddle region, which inserts into cardiolipin-containing membrane, promotes GTP hydrolysis and the helical assembly of a flexible OPA1 lattice on the membrane, which drives membrane curvature and mitochondrial fusion. Plays a role in the maintenance and remodeling of mitochondrial cristae, some invaginations of the mitochondrial inner membrane that provide an increase in the surface area. Probably acts by forming helical filaments at the inside of inner membrane tubes with the shape and dimensions of crista junctions. Functionally, constitutes the soluble short form (S-OPA1) generated by cleavage by OMA1, which plays a central role in mitochondrial inner membrane fusion and cristae morphology. The transmembrane long form (L-OPA1) and the S-OPA1 form higher-order helical assemblies that coordinate the fusion of mitochondrial inner membranes. Inner membrane-anchored L-OPA1 molecules initiate membrane remodeling by recruiting soluble S-OPA1 to rapidly polymerize into a flexible cylindrical scaffold encaging the mitochondrial inner membrane. Once at the membrane surface, the formation of S-OPA1 helices induce bilayer curvature. OPA1 dimerization through the paddle region, which inserts into cardiolipin-containing membrane, promotes GTP hydrolysis and the helical assembly of a flexible OPA1 lattice on the membrane, which drives membrane curvature and mitochondrial fusion. Excess levels of S-OPA1 produced by cleavage by OMA1 following stress conditions that induce loss of mitochondrial membrane potential, lead to an impaired equilibrium between L-OPA1 and S-OPA1, thereby inhibiting mitochondrial fusion. Plays a role in the maintenance and remodeling of mitochondrial cristae, some invaginations of the mitochondrial inner membrane that provide an increase in the surface area. Probably acts by forming helical filaments at the inside of inner membrane tubes with the shape and dimensions of crista junctions. This is Dynamin-like GTPase OPA1, mitochondrial from Gallus gallus (Chicken).